The chain runs to 200 residues: MEKPYNKNEGNLENEGKPEDEVEPDDEGKSDEEEKPDAEGKTECEGKRKAEGEPGDEGQLEDKGSQEKQGKSEGEGKPQGEGKPASQAKPEGQPRAAEKRPAGDYVPRKAKRKTDRGTDDSPKDSQEDLQERHLSSEEMMRECGDVSRAQEELRKKQKMGGFHWMQRDVQDPFAPRGQRGVRGVRGGGRGQRGLHDIPYL.

A disordered region spans residues 1 to 200; it reads MEKPYNKNEG…QRGLHDIPYL (200 aa). Over residues 20 to 36 the composition is skewed to acidic residues; the sequence is DEVEPDDEGKSDEEEKP. Phosphoserine is present on Ser30. Basic and acidic residues-rich tracts occupy residues 37–52, 60–80, and 115–154; these read DAEG…KAEG, LEDK…KPQG, and DRGT…EELR. Ser65 carries the phosphoserine modification.

Belongs to the TFS-II family. TFA subfamily.

The protein localises to the nucleus. May be involved in transcriptional regulation. The sequence is that of Transcription elongation factor A protein-like 6 (TCEAL6) from Homo sapiens (Human).